The chain runs to 251 residues: Ubiquinone/menaquinone biosynthesis C-methyltransferase UbiE (251 aa).

Residues threonine 74, aspartate 95, and 123–124 (DA) each bind S-adenosyl-L-methionine.

It belongs to the class I-like SAM-binding methyltransferase superfamily. MenG/UbiE family.

It catalyses the reaction a 2-demethylmenaquinol + S-adenosyl-L-methionine = a menaquinol + S-adenosyl-L-homocysteine + H(+). It carries out the reaction a 2-methoxy-6-(all-trans-polyprenyl)benzene-1,4-diol + S-adenosyl-L-methionine = a 5-methoxy-2-methyl-3-(all-trans-polyprenyl)benzene-1,4-diol + S-adenosyl-L-homocysteine + H(+). The protein operates within quinol/quinone metabolism; menaquinone biosynthesis; menaquinol from 1,4-dihydroxy-2-naphthoate: step 2/2. Its pathway is cofactor biosynthesis; ubiquinone biosynthesis. Methyltransferase required for the conversion of demethylmenaquinol (DMKH2) to menaquinol (MKH2) and the conversion of 2-polyprenyl-6-methoxy-1,4-benzoquinol (DDMQH2) to 2-polyprenyl-3-methyl-6-methoxy-1,4-benzoquinol (DMQH2). The sequence is that of Ubiquinone/menaquinone biosynthesis C-methyltransferase UbiE from Idiomarina loihiensis (strain ATCC BAA-735 / DSM 15497 / L2-TR).